Consider the following 286-residue polypeptide: Expansin-like protein 1 (286 aa).

A signal peptide spans 1-21 (MKTFVLFVILLCLTFLSISKS). Topologically, residues 22–265 (ETCPFSQSLV…TGASIGTPSD (244 aa)) are extracellular. Positions 44–145 (AGNCGYENLM…YKVPCGVNGN (102 aa)) constitute an Expansin-like EG45 domain. 2 disulfides stabilise this stretch: Cys47–Cys77 and Cys80–Cys140. N-linked (GlcNAc...) asparagine glycans are attached at residues Asn82 and Asn89. Residues 266-286 (ASSLTLYALFSLTILFLVMLN) form a helical membrane-spanning segment.

This sequence belongs to the expansin family. Expansin A subfamily.

Its subcellular location is the membrane. May serve to lubricate the movement of the cellulose microfibrils during cell growth and wall extension and/or they may serve to maintain the fluid state of the slug cell wall. This chain is Expansin-like protein 1 (expl1), found in Dictyostelium discoideum (Social amoeba).